A 335-amino-acid chain; its full sequence is Peroxidase 53 (335 aa).

Residues 1 to 30 (MAVTNLPTCDGLFIISLIVIVSSIFGTSSA) form the signal peptide. Gln31 is subject to Pyrrolidone carboxylic acid. Residues Asn33 and Asn43 are each glycosylated (N-linked (GlcNAc...) asparagine). 4 cysteine pairs are disulfide-bonded: Cys41-Cys121, Cys74-Cys79, Cys127-Cys329, and Cys206-Cys238. The active-site Proton acceptor is His72. Asp73, Val76, Gly78, Asp80, and Ser82 together coordinate Ca(2+). N-linked (GlcNAc...) asparagine glycosylation occurs at Asn165. Residue Pro169 participates in substrate binding. A glycan (N-linked (GlcNAc...) asparagine) is linked at Asn177. His199 is a binding site for heme b. A Ca(2+)-binding site is contributed by Thr200. 3 N-linked (GlcNAc...) asparagine glycosylation sites follow: Asn215, Asn227, and Asn241. The Ca(2+) site is built by Asp251, Thr254, and Asp259. An N-linked (GlcNAc...) asparagine glycan is attached at Asn297.

The protein belongs to the peroxidase family. Classical plant (class III) peroxidase subfamily. Ca(2+) is required as a cofactor. The cofactor is heme b. In terms of tissue distribution, mainly expressed in roots.

It localises to the secreted. The catalysed reaction is 2 a phenolic donor + H2O2 = 2 a phenolic radical donor + 2 H2O. Removal of H(2)O(2), oxidation of toxic reductants, biosynthesis and degradation of lignin, suberization, auxin catabolism, response to environmental stresses such as wounding, pathogen attack and oxidative stress. These functions might be dependent on each isozyme/isoform in each plant tissue. Functionally, closely linked to lignin formation by showing monolignol substrate specificity. This is Peroxidase 53 (PER53) from Arabidopsis thaliana (Mouse-ear cress).